Consider the following 272-residue polypeptide: Rhomboid-type serine protease B (272 aa).

6 consecutive transmembrane segments (helical) span residues 30 to 50 (LVLLVILAFWLLELQTIWSVV), 72 to 92 (PFIHVGFFHAFVNLLALTPLL), 103 to 123 (TAVALFIGPLSTFPAGIYILV), 133 to 153 (AVVGASVWIFLLLGSEAIKTF), 164 to 184 (TKIPTWTSPLFACALVSIFVP), and 186 to 206 (TSFLGHLSAIIIGYLLGLGYL). Catalysis depends on Ser138, which acts as the Nucleophile. The active site involves His191.

This sequence belongs to the peptidase S54 family.

It localises to the membrane. The enzyme catalyses Cleaves type-1 transmembrane domains using a catalytic dyad composed of serine and histidine that are contributed by different transmembrane domains.. Its function is as follows. Rhomboid protease that catalyzes intramembrane proteolysis. Required for transcription factor srbA activation by mediating its release from the membrane and thereby regulating its activity under hypoxic conditions. Essential for iron homeostasis and resistance to azoles such as voriconazole. Required for virulence in murine models of invasive pulmonary aspergillosis (IPA). The sequence is that of Rhomboid-type serine protease B from Aspergillus fumigatus (strain ATCC MYA-4609 / CBS 101355 / FGSC A1100 / Af293) (Neosartorya fumigata).